A 116-amino-acid chain; its full sequence is Helper of Tim protein 13 (116 aa).

The CHY-type; degenerate zinc-finger motif lies at 10 to 94; it reads TVDDQSRCVH…SNLICPNCRS (85 aa). 8 residues coordinate Zn(2+): Cys-17, His-19, Cys-40, Cys-43, Cys-68, Cys-71, Cys-89, and Cys-92.

As to quaternary structure, interacts with the small Tim proteins TIM8, TIM9, TIM10, TIM12, and TIM13.

It is found in the mitochondrion intermembrane space. The protein resides in the mitochondrion membrane. Its function is as follows. Required for the assembly or recycling of the small Tim proteins in the mitochondrial intermembrane, thereby participating in the import and insertion of multi-pass transmembrane proteins into the mitochondrial inner membrane. Probably acts by facilitating the formation of disulfide bonds in small Tim proteins. This Saccharomyces cerevisiae (strain ATCC 204508 / S288c) (Baker's yeast) protein is Helper of Tim protein 13 (HOT13).